The primary structure comprises 324 residues: Glyoxylate/hydroxypyruvate reductase B (324 aa).

Residues arginine 237 and glutamate 266 contribute to the active site. The Proton donor role is filled by histidine 285.

The protein belongs to the D-isomer specific 2-hydroxyacid dehydrogenase family. GhrB subfamily. As to quaternary structure, homodimer.

It is found in the cytoplasm. It carries out the reaction glycolate + NADP(+) = glyoxylate + NADPH + H(+). The catalysed reaction is (R)-glycerate + NAD(+) = 3-hydroxypyruvate + NADH + H(+). It catalyses the reaction (R)-glycerate + NADP(+) = 3-hydroxypyruvate + NADPH + H(+). Catalyzes the NADPH-dependent reduction of glyoxylate and hydroxypyruvate into glycolate and glycerate, respectively. This is Glyoxylate/hydroxypyruvate reductase B from Salmonella dublin (strain CT_02021853).